Here is a 72-residue protein sequence, read N- to C-terminus: Translation initiation factor IF-1 (72 aa).

The S1-like domain occupies 1 to 72; sequence MAKEDSIRMQ…NKGRIVYRER (72 aa).

Belongs to the IF-1 family. In terms of assembly, component of the 30S ribosomal translation pre-initiation complex which assembles on the 30S ribosome in the order IF-2 and IF-3, IF-1 and N-formylmethionyl-tRNA(fMet); mRNA recruitment can occur at any time during PIC assembly.

It is found in the cytoplasm. Its function is as follows. One of the essential components for the initiation of protein synthesis. Stabilizes the binding of IF-2 and IF-3 on the 30S subunit to which N-formylmethionyl-tRNA(fMet) subsequently binds. Helps modulate mRNA selection, yielding the 30S pre-initiation complex (PIC). Upon addition of the 50S ribosomal subunit IF-1, IF-2 and IF-3 are released leaving the mature 70S translation initiation complex. The polypeptide is Translation initiation factor IF-1 (Halorhodospira halophila (strain DSM 244 / SL1) (Ectothiorhodospira halophila (strain DSM 244 / SL1))).